The sequence spans 488 residues: Glutamyl-tRNA(Gln) amidotransferase subunit A (488 aa).

Residues K77 and S152 each act as charge relay system in the active site. Catalysis depends on S176, which acts as the Acyl-ester intermediate.

The protein belongs to the amidase family. GatA subfamily. In terms of assembly, heterotrimer of A, B and C subunits.

The enzyme catalyses L-glutamyl-tRNA(Gln) + L-glutamine + ATP + H2O = L-glutaminyl-tRNA(Gln) + L-glutamate + ADP + phosphate + H(+). Functionally, allows the formation of correctly charged Gln-tRNA(Gln) through the transamidation of misacylated Glu-tRNA(Gln) in organisms which lack glutaminyl-tRNA synthetase. The reaction takes place in the presence of glutamine and ATP through an activated gamma-phospho-Glu-tRNA(Gln). This Streptococcus agalactiae serotype Ia (strain ATCC 27591 / A909 / CDC SS700) protein is Glutamyl-tRNA(Gln) amidotransferase subunit A.